Reading from the N-terminus, the 213-residue chain is 24 kDa ookinete surface protein (213 aa).

The signal sequence occupies residues 1–28 (MNFKYSFIFLFFIQLAIRYNNAKITVDT). An EGF-like 1; truncated domain is found at 30-59 (CKGGKLIQMSNHYECKCPSGYALKTENTCE). EGF-like domains are found at residues 60–108 (PIVK…NICK) and 108–148 (KPTR…GKCT). Intrachain disulfides connect C64-C80, C74-C94, C96-C107, C112-C122, C117-C134, and C136-C147. Residues 151 to 175 (GETKCLLKCKAAEECKLTGKHYECV) enclose the EGF-like 4; truncated domain. Residue N190 is the site of GPI-anchor amidated asparagine attachment. N190 carries N-linked (GlcNAc...) asparagine glycosylation. The propeptide at 191 to 213 (SSFMNGMSIISIIALLVIYVIVM) is removed in mature form.

It is found in the cell membrane. This chain is 24 kDa ookinete surface protein, found in Plasmodium berghei (strain Anka).